The primary structure comprises 302 residues: Elongation factor Ts (302 aa).

The involved in Mg(2+) ion dislocation from EF-Tu stretch occupies residues 82–85; that stretch reads TDFV.

This sequence belongs to the EF-Ts family.

Its subcellular location is the cytoplasm. In terms of biological role, associates with the EF-Tu.GDP complex and induces the exchange of GDP to GTP. It remains bound to the aminoacyl-tRNA.EF-Tu.GTP complex up to the GTP hydrolysis stage on the ribosome. The chain is Elongation factor Ts from Nitrosospira multiformis (strain ATCC 25196 / NCIMB 11849 / C 71).